We begin with the raw amino-acid sequence, 230 residues long: Enolase-phosphatase E1 (230 aa).

This sequence belongs to the HAD-like hydrolase superfamily. MasA/MtnC family. As to quaternary structure, monomer. Mg(2+) serves as cofactor.

It catalyses the reaction 5-methylsulfanyl-2,3-dioxopentyl phosphate + H2O = 1,2-dihydroxy-5-(methylsulfanyl)pent-1-en-3-one + phosphate. It functions in the pathway amino-acid biosynthesis; L-methionine biosynthesis via salvage pathway; L-methionine from S-methyl-5-thio-alpha-D-ribose 1-phosphate: step 3/6. The protein operates within amino-acid biosynthesis; L-methionine biosynthesis via salvage pathway; L-methionine from S-methyl-5-thio-alpha-D-ribose 1-phosphate: step 4/6. In terms of biological role, bifunctional enzyme that catalyzes the enolization of 2,3-diketo-5-methylthiopentyl-1-phosphate (DK-MTP-1-P) into the intermediate 2-hydroxy-3-keto-5-methylthiopentenyl-1-phosphate (HK-MTPenyl-1-P), which is then dephosphorylated to form the acireductone 1,2-dihydroxy-3-keto-5-methylthiopentene (DHK-MTPene). The polypeptide is Enolase-phosphatase E1 (Bradyrhizobium sp. (strain BTAi1 / ATCC BAA-1182)).